Consider the following 288-residue polypeptide: MDSQYFLAFSLSLLLIFSQISSFSFSVDPTRITQLSWTPRAFLYKGFLSDEECDHLIKLAKGKLEKSMVVADVDSGESEDSEVRTSSGMFLTKRQDDIVANVEAKLAAWTFLPEENGEALQILHYENGQKYDPHFDYFYDKKALELGGHRIATVLMYLSNVTKGGETVFPNWKGKTPQLKDDSWSKCAKQGYAVKPRKGDALLFFNLHLNGTTDPNSLHGSCPVIEGEKWSATRWIHVRSFGKKKLVCVDDHESCQEWADAGECEKNPMYMVGSETSLGFCRKSCKAC.

Residues 1-4 are Cytoplasmic-facing; the sequence is MDSQ. Residues 5-27 form a helical; Signal-anchor for type II membrane protein membrane-spanning segment; that stretch reads YFLAFSLSLLLIFSQISSFSFSV. The Lumenal segment spans residues 28–288; sequence DPTRITQLSW…GFCRKSCKAC (261 aa). A Fe2OG dioxygenase domain is found at 116–238; the sequence is NGEALQILHY…KWSATRWIHV (123 aa). Fe cation contacts are provided by His-134 and Asp-136. N-linked (GlcNAc...) asparagine glycans are attached at residues Asn-160 and Asn-210. His-219 provides a ligand contact to Fe cation. Lys-229 provides a ligand contact to 2-oxoglutarate. The region spanning 248 to 288 is the ShKT domain; the sequence is CVDDHESCQEWADAGECEKNPMYMVGSETSLGFCRKSCKAC. Cystine bridges form between Cys-248-Cys-288, Cys-255-Cys-281, and Cys-264-Cys-285.

Belongs to the P4HA family. Fe(2+) serves as cofactor. Requires L-ascorbate as cofactor.

The protein resides in the endoplasmic reticulum membrane. The catalysed reaction is L-prolyl-[collagen] + 2-oxoglutarate + O2 = trans-4-hydroxy-L-prolyl-[collagen] + succinate + CO2. Functionally, catalyzes the post-translational formation of 4-hydroxyproline in -Xaa-Pro-Gly- sequences in proline-rich peptide sequences of plant glycoproteins and other proteins. Hydroxyprolines are important constituent of many plant cell wall glycoproteins such as extensins, hydroxyproline-rich glycoproteins, lectins and arabinogalactan proteins. The chain is Probable prolyl 4-hydroxylase 6 from Arabidopsis thaliana (Mouse-ear cress).